The following is a 94-amino-acid chain: Co-chaperonin GroES (94 aa).

It belongs to the GroES chaperonin family. As to quaternary structure, heptamer of 7 subunits arranged in a ring. Interacts with the chaperonin GroEL.

Its subcellular location is the cytoplasm. Functionally, together with the chaperonin GroEL, plays an essential role in assisting protein folding. The GroEL-GroES system forms a nano-cage that allows encapsulation of the non-native substrate proteins and provides a physical environment optimized to promote and accelerate protein folding. GroES binds to the apical surface of the GroEL ring, thereby capping the opening of the GroEL channel. In Halothermothrix orenii (strain H 168 / OCM 544 / DSM 9562), this protein is Co-chaperonin GroES.